The following is a 654-amino-acid chain: MTVENAPQRETHAFQAEINQLLSLVINSLYSHKEIFLRELVSNASDALDKLRFRAITEPELLADEPALELRLIPDEAKGTLTIEDTGIGMSHDELVKNLGTIAHSGSREFIEALAQKGQQKDMQLIGQFGVGFYSAYLVADRVEVVSRAAGQGQSAWRWTSEAKGSFTVEPAERAARGTSITLHLKEDQKEFLGEWRLRSLITQYSDYVGHPIKLQVSKTTGTGDEAKTETSLEVVNKASALWQRSKSEITDEQYQEFYKHLTHDWEAPLAWTHFKADGNTQFTGLLFVPKQPPFDLDAQQQRGVRLFVKRVFIMDRCEELVPQWLRFVRGVIDSDDLPLNVSRELLQDSQVVRAIRKHVVKKSVDLLEKLAKDKPDDYLTFWKAFGTVLKEGLATEAEQKDKLGGLLRYESSREEGLTSLADYVGRMKEGQEAIYYVYGESRKAVADSPHLEALKQRGFEVLYMTDPVDEWAAQGLREFQGKPLVSALQADLKLQSTDEQKKEQEQHAEGLKTLTSKMKDVLQESVREVRVSDRLTDSPVCLVVPEGGSPAYLERLLQQRGRGAGMPRVKRILEVNPKHPVIEHLKAVHDRDPAAAQVAEWIELLHDQALLTEGSTIADPNRFARRMTGLLTQVAALAAAPAPAQTPASATAS.

Residues 1–344 (MTVENAPQRE…SDDLPLNVSR (344 aa)) are a; substrate-binding. The interval 345–556 (ELLQDSQVVR…EGGSPAYLER (212 aa)) is b. The interval 557–654 (LLQQRGRGAG…AQTPASATAS (98 aa)) is c.

Belongs to the heat shock protein 90 family. As to quaternary structure, homodimer.

It localises to the cytoplasm. Its function is as follows. Molecular chaperone. Has ATPase activity. The polypeptide is Chaperone protein HtpG (Myxococcus xanthus (strain DK1622)).